The following is a 161-amino-acid chain: Putative 4-hydroxy-4-methyl-2-oxoglutarate aldolase (161 aa).

Residues 75–78 (GDML) and arginine 97 contribute to the substrate site. Aspartate 98 lines the a divalent metal cation pocket.

It belongs to the class II aldolase/RraA-like family. Homotrimer. It depends on a divalent metal cation as a cofactor.

The catalysed reaction is 4-hydroxy-4-methyl-2-oxoglutarate = 2 pyruvate. It carries out the reaction oxaloacetate + H(+) = pyruvate + CO2. In terms of biological role, catalyzes the aldol cleavage of 4-hydroxy-4-methyl-2-oxoglutarate (HMG) into 2 molecules of pyruvate. Also contains a secondary oxaloacetate (OAA) decarboxylase activity due to the common pyruvate enolate transition state formed following C-C bond cleavage in the retro-aldol and decarboxylation reactions. The sequence is that of Putative 4-hydroxy-4-methyl-2-oxoglutarate aldolase from Marinomonas sp. (strain MWYL1).